Reading from the N-terminus, the 176-residue chain is ATP synthase subunit b, chloroplastic (176 aa).

The chain crosses the membrane as a helical span at residues 27-49 (ILNLAAVFALLAYVGTDFVSSLL).

Belongs to the ATPase B chain family. F-type ATPases have 2 components, F(1) - the catalytic core - and F(0) - the membrane proton channel. F(1) has five subunits: alpha(3), beta(3), gamma(1), delta(1), epsilon(1). F(0) has four main subunits: a(1), b(1), b'(1) and c(10-14). The alpha and beta chains form an alternating ring which encloses part of the gamma chain. F(1) is attached to F(0) by a central stalk formed by the gamma and epsilon chains, while a peripheral stalk is formed by the delta, b and b' chains.

It is found in the plastid. Its subcellular location is the chloroplast thylakoid membrane. Functionally, f(1)F(0) ATP synthase produces ATP from ADP in the presence of a proton or sodium gradient. F-type ATPases consist of two structural domains, F(1) containing the extramembraneous catalytic core and F(0) containing the membrane proton channel, linked together by a central stalk and a peripheral stalk. During catalysis, ATP synthesis in the catalytic domain of F(1) is coupled via a rotary mechanism of the central stalk subunits to proton translocation. In terms of biological role, component of the F(0) channel, it forms part of the peripheral stalk, linking F(1) to F(0). In Nephroselmis olivacea (Green alga), this protein is ATP synthase subunit b, chloroplastic.